A 597-amino-acid polypeptide reads, in one-letter code: Probable translation initiation factor IF-2 (597 aa).

The 218-residue stretch at 8–225 folds into the tr-type G domain; sequence LRQPIVVVLG…LLAGLTQQYL (218 aa). Positions 17 to 24 are G1; that stretch reads GHVDHGKT. GTP is bound at residue 17–24; sequence GHVDHGKT. Residues 42 to 46 are G2; sequence EMTQE. The tract at residues 81 to 84 is G3; sequence DTPG. Residues 81-85 and 135-138 each bind GTP; these read DTPGH and NKID. The interval 135–138 is G4; it reads NKID. The tract at residues 203-205 is G5; sequence SGK.

Belongs to the TRAFAC class translation factor GTPase superfamily. Classic translation factor GTPase family. IF-2 subfamily.

Its function is as follows. Function in general translation initiation by promoting the binding of the formylmethionine-tRNA to ribosomes. Seems to function along with eIF-2. In Metallosphaera sedula (strain ATCC 51363 / DSM 5348 / JCM 9185 / NBRC 15509 / TH2), this protein is Probable translation initiation factor IF-2.